Reading from the N-terminus, the 231-residue chain is MKFFALTTLLAATASALPTSHPVQELEARQLGGGTTRNDLTNGNSASCADVIFIYARGSTETGNLGTLGPSIASKLESAFGRDGVWIQGVGGAYRATLGDNSLPRGTSSAAIREMLGLFQQANTKCPDATLIAGGYSQGAALGAASVEDLDSAIRDKIAGTVLFGYTKNLQNHGRIPNFPADRTKVFCNTGDLVCTGSLIIAAPHLTYGPDARGPAPEFLIEKVRAVRGSA.

A signal peptide spans 1 to 16; that stretch reads MKFFALTTLLAATASA. A disulfide bridge connects residues cysteine 48 and cysteine 126. Serine 137 serves as the catalytic Nucleophile. Cysteines 188 and 195 form a disulfide. Aspartate 192 is a catalytic residue. Histidine 205 acts as the Proton donor/acceptor in catalysis.

Belongs to the cutinase family. Post-translationally, the 2 disulfide bonds play a critical role in holding the catalytic residues in juxta-position; reduction of the disulfide bridges results in the complete inactivation of the enzyme.

The protein localises to the secreted. It carries out the reaction cutin + H2O = cutin monomers.. Its function is as follows. Catalyzes the hydrolysis of complex carboxylic polyesters found in the cell wall of plants. Degrades cutin, a macromolecule that forms the structure of the plant cuticle. Allows pathogenic fungi to penetrate through the cuticular barrier into the host plant during the initial stage of fungal infection. The chain is Cutinase 2 (CUT2) from Fusarium vanettenii (Neocosmospora pisi).